Consider the following 350-residue polypeptide: Phosphotriesterase-related protein (350 aa).

A divalent metal cation contacts are provided by His22, His24, Glu169, His201, His230, and Asp298.

Belongs to the metallo-dependent hydrolases superfamily. Phosphotriesterase family. Requires a divalent metal cation as cofactor.

The protein is Phosphotriesterase-related protein of Drosophila sechellia (Fruit fly).